The chain runs to 216 residues: uncharacterized protein (216 aa).

2 consecutive 4Fe-4S ferredoxin-type domains span residues 160 to 189 (DDKP…IDEK) and 188 to 216 (EKPK…ALLP). Residues cysteine 169, cysteine 172, cysteine 175, cysteine 179, cysteine 197, cysteine 200, cysteine 203, and cysteine 207 each contribute to the [4Fe-4S] cluster site.

The protein belongs to the FrhG family.

This is an uncharacterized protein from Methanocaldococcus jannaschii (strain ATCC 43067 / DSM 2661 / JAL-1 / JCM 10045 / NBRC 100440) (Methanococcus jannaschii).